A 291-amino-acid polypeptide reads, in one-letter code: Meteorin (291 aa).

A signal peptide spans M1 to A21. 5 disulfide bridges follow: C28-C49, C80-C116, C169-C240, C172-C264, and C182-C286.

This sequence belongs to the meteorin family. In terms of assembly, monomer.

Its subcellular location is the secreted. Functionally, involved in both glial cell differentiation and axonal network formation during neurogenesis. Promotes astrocyte differentiation and transforms cerebellar astrocytes into radial glia. Also induces axonal extension in small and intermediate neurons of sensory ganglia by activating nearby satellite glia. In Rattus norvegicus (Rat), this protein is Meteorin (Metrn).